Reading from the N-terminus, the 912-residue chain is Rho guanine nucleotide exchange factor 1 (912 aa).

Residues 41–232 (EQNSQFQSLE…GLYMRHLGVR (192 aa)) form the RGSL domain. The interval 248–413 (KVMGNRRSDE…PDTLHSLPKS (166 aa)) is disordered. Residues 283–313 (DFRHLKAEVDAEKPGATDRKGGVGMPSRDRN) are compositionally biased toward basic and acidic residues. The segment covering 365–381 (STDEGAETESPEPGDEG) has biased composition (acidic residues). A phosphoserine mark is found at Ser-374 and Ser-409. A DH domain is found at 416 to 605 (KRQEVISELL…REILHHVNQA (190 aa)). A PH domain is found at 647-760 (KLVHEGPLTW…WCALITETAG (114 aa)). Position 695 is a phosphothreonine (Thr-695). Tyr-738 is subject to Phosphotyrosine; by JAK2. 2 disordered regions span residues 763–802 (KVPA…PADA) and 841–865 (AEED…LSPA). The span at 777–789 (PSSTREPLLSSSE) shows a compositional bias: low complexity. A Phosphoserine modification is found at Ser-863. A coiled-coil region spans residues 865 to 896 (ARTQEIQENLLSLEETMKQLEELEEEFCRLRP).

In terms of assembly, interacts with RHOA, GNA12 and GNA13. Homooligomerizes through the coiled coil region. May interact with CCPG1. Interacts with CTNNAL1. Phosphorylated by PKCA. Angiotensin-2 induced Tyr-738 phosphorylation is mediated by JAK2. In terms of tissue distribution, ubiquitously expressed.

The protein localises to the cytoplasm. It is found in the membrane. Functionally, seems to play a role in the regulation of RhoA GTPase by guanine nucleotide-binding alpha-12 (GNA12) and alpha-13 (GNA13) subunits. Acts as a GTPase-activating protein (GAP) for GNA12 and GNA13, and as guanine nucleotide exchange factor (GEF) for RhoA GTPase. Activated G alpha 13/GNA13 stimulates the RhoGEF activity through interaction with the RGS-like domain. This GEF activity is inhibited by binding to activated GNA12. Mediates angiotensin-2-induced RhoA activation. In lymphoid follicles, may trigger activation of GNA13 as part of S1PR2-dependent signaling pathway that leads to inhibition of germinal center (GC) B cell growth and migration outside the GC niche. In Homo sapiens (Human), this protein is Rho guanine nucleotide exchange factor 1 (ARHGEF1).